The primary structure comprises 201 residues: FMN-dependent NADH:quinone oxidoreductase (201 aa).

FMN is bound by residues S9, 16–18, and 93–96; these read SVS and MYNF.

It belongs to the azoreductase type 1 family. In terms of assembly, homodimer. FMN is required as a cofactor.

It carries out the reaction 2 a quinone + NADH + H(+) = 2 a 1,4-benzosemiquinone + NAD(+). The catalysed reaction is N,N-dimethyl-1,4-phenylenediamine + anthranilate + 2 NAD(+) = 2-(4-dimethylaminophenyl)diazenylbenzoate + 2 NADH + 2 H(+). Its function is as follows. Quinone reductase that provides resistance to thiol-specific stress caused by electrophilic quinones. Functionally, also exhibits azoreductase activity. Catalyzes the reductive cleavage of the azo bond in aromatic azo compounds to the corresponding amines. This is FMN-dependent NADH:quinone oxidoreductase from Gluconacetobacter diazotrophicus (strain ATCC 49037 / DSM 5601 / CCUG 37298 / CIP 103539 / LMG 7603 / PAl5).